Reading from the N-terminus, the 300-residue chain is Ribosomal protein L11 methyltransferase (300 aa).

S-adenosyl-L-methionine-binding residues include T152, G173, D195, and N234.

The protein belongs to the methyltransferase superfamily. PrmA family.

It is found in the cytoplasm. The enzyme catalyses L-lysyl-[protein] + 3 S-adenosyl-L-methionine = N(6),N(6),N(6)-trimethyl-L-lysyl-[protein] + 3 S-adenosyl-L-homocysteine + 3 H(+). Its function is as follows. Methylates ribosomal protein L11. The sequence is that of Ribosomal protein L11 methyltransferase from Burkholderia ambifaria (strain MC40-6).